Here is a 1013-residue protein sequence, read N- to C-terminus: Probable outer membrane protein PmpG (1013 aa).

The N-terminal stretch at 1–27 is a signal peptide; that stretch reads MQTSFHKFFLSMILAYSCCSLSGGGYA. An Autotransporter domain is found at 733–1013; it reads GRSYCRGLWV…GLSAGSKVRF (281 aa).

Belongs to the PMP outer membrane protein family.

The protein localises to the secreted. The protein resides in the cell wall. Its subcellular location is the cell outer membrane. The protein is Probable outer membrane protein PmpG (pmpG) of Chlamydia trachomatis serovar D (strain ATCC VR-885 / DSM 19411 / UW-3/Cx).